Here is a 499-residue protein sequence, read N- to C-terminus: Nucleoside transporter 2 (499 aa).

At 1-30 (MTGQSAAVEGSNSALPWYRMGFHTLAEFNT) the chain is on the cytoplasmic side. 5 consecutive transmembrane segments (helical) span residues 31–51 (YVTF…VTSA), 112–132 (LFLG…VPAA), 133–153 (TIPT…MGGL), 179–199 (WGLT…QVSM), and 212–232 (IYFG…VLLR). Residues 255-267 (VEPEESQDSKEPA) show a composition bias toward basic and acidic residues. Positions 255–276 (VEPEESQDSKEPATGDVAEAPK) are disordered. Residue Asn326 is glycosylated (N-linked (GlcNAc...) asparagine). The next 5 membrane-spanning stretches (helical) occupy residues 350 to 370 (LCAF…FFLV), 378 to 398 (MTII…LLMI), 406 to 426 (KLVI…VLCV), 428 to 448 (GFIP…LTNG), and 475 to 495 (MLAG…SLAI).

This sequence belongs to the SLC29A/ENT transporter (TC 2.A.57) family.

Its subcellular location is the cell membrane. The protein localises to the cell projection. The protein resides in the cilium. It localises to the flagellum. The enzyme catalyses inosine(in) + H(+)(in) = inosine(out) + H(+)(out). The catalysed reaction is guanosine(in) + H(+)(in) = guanosine(out) + H(+)(out). It catalyses the reaction xanthosine(in) + H(+)(in) = xanthosine(out) + H(+)(out). Its function is as follows. High affinity nucleoside:H(+) symporter; transports inosine and guanosine. Can transport xanthosine. This Leishmania donovani protein is Nucleoside transporter 2.